The primary structure comprises 184 residues: Large ribosomal subunit protein uL22 (184 aa).

The disordered stretch occupies residues 160–184 (PEEEVAQKKKISQKKLKKQKLMARE). Over residues 167–184 (KKKISQKKLKKQKLMARE) the composition is skewed to basic residues.

It belongs to the universal ribosomal protein uL22 family. Component of the large ribosomal subunit.

It localises to the cytoplasm. Its function is as follows. Component of the large ribosomal subunit. The ribosome is a large ribonucleoprotein complex responsible for the synthesis of proteins in the cell. The chain is Large ribosomal subunit protein uL22 (RPL17) from Bos taurus (Bovine).